A 247-amino-acid polypeptide reads, in one-letter code: MAGEADGPFKRVLVPVLLPEKCYDQLFVHWDFLHVPCLKILLSKGLGLGIVAGSLLVKLPQIFKILGAKSAEGLSLQSVMLELVALTGTVIYSITNNFPFSSWGEALFLTLQTITICLLVLHYRGDTVKGVALLACYATLLLALLSPLTPLAVVTMLQASNVPAVVVGKLLQAATNYHNGHTGQLSAITVFMLFGGSLARIFTSVQETGDPLMAGVFVVSSLCNGLIAAQVLFYWNAKPPHKHKKEQ.

Position 2 is an N-acetylalanine (alanine 2). Residues 39-105 enclose the PQ-loop 1 domain; the sequence is KILLSKGLGL…NNFPFSSWGE (67 aa). The next 7 helical transmembrane spans lie at 46–66, 74–94, 103–123, 128–145, 151–171, 185–205, and 213–233; these read LGLG…FKIL, LSLQ…IYSI, WGEA…VLHY, VKGV…LALL, LAVV…GKLL, LSAI…FTSV, and MAGV…QVLF. The 58-residue stretch at 159–216 folds into the PQ-loop 2 domain; that stretch reads ASNVPAVVVGKLLQAATNYHNGHTGQLSAITVFMLFGGSLARIFTSVQETGDPLMAGV.

It belongs to the MPDU1 (TC 2.A.43.3) family.

The protein localises to the membrane. In terms of biological role, required for normal utilization of mannose-dolichol phosphate (Dol-P-Man) in the synthesis of N-linked and O-linked oligosaccharides and GPI anchors. The polypeptide is Mannose-P-dolichol utilization defect 1 protein (MPDU1) (Cricetulus griseus (Chinese hamster)).